The chain runs to 829 residues: DNA ligase (829 aa).

Residues 38–42 (DAEYD), 87–88 (SL), and Glu-127 contribute to the NAD(+) site. Lys-129 serves as the catalytic N6-AMP-lysine intermediate. NAD(+) contacts are provided by Arg-150, Glu-187, Lys-305, and Lys-329. 4 residues coordinate Zn(2+): Cys-455, Cys-458, Cys-473, and Cys-479. The tract at residues 534-564 (ETADKGSSENENGDAETVSGDLSKYNTQNGK) is disordered. One can recognise a BRCT domain in the interval 752–829 (GINKAVAGKT…SEAELLTLLC (78 aa)).

This sequence belongs to the NAD-dependent DNA ligase family. LigA subfamily. The cofactor is Mg(2+). Requires Mn(2+) as cofactor.

It catalyses the reaction NAD(+) + (deoxyribonucleotide)n-3'-hydroxyl + 5'-phospho-(deoxyribonucleotide)m = (deoxyribonucleotide)n+m + AMP + beta-nicotinamide D-nucleotide.. Its function is as follows. DNA ligase that catalyzes the formation of phosphodiester linkages between 5'-phosphoryl and 3'-hydroxyl groups in double-stranded DNA using NAD as a coenzyme and as the energy source for the reaction. It is essential for DNA replication and repair of damaged DNA. This Neisseria gonorrhoeae (strain ATCC 700825 / FA 1090) protein is DNA ligase.